The sequence spans 252 residues: Diphthine synthase (252 aa).

S-adenosyl-L-methionine is bound by residues leucine 9, aspartate 85, valine 88, 113 to 114, leucine 165, alanine 202, and histidine 227; that span reads SI.

This sequence belongs to the diphthine synthase family. In terms of assembly, homodimer.

It carries out the reaction 2-[(3S)-amino-3-carboxypropyl]-L-histidyl-[translation elongation factor 2] + 3 S-adenosyl-L-methionine = diphthine-[translation elongation factor 2] + 3 S-adenosyl-L-homocysteine + 3 H(+). Its pathway is protein modification; peptidyl-diphthamide biosynthesis. Functionally, S-adenosyl-L-methionine-dependent methyltransferase that catalyzes the trimethylation of the amino group of the modified target histidine residue in translation elongation factor 2 (EF-2), to form an intermediate called diphthine. The three successive methylation reactions represent the second step of diphthamide biosynthesis. The chain is Diphthine synthase from Methanospirillum hungatei JF-1 (strain ATCC 27890 / DSM 864 / NBRC 100397 / JF-1).